The primary structure comprises 193 residues: Ion-translocating oxidoreductase complex subunit B (193 aa).

Residues 1–23 are hydrophobic; it reads MTFLFIVITLLALIFGAILGFAS. Positions 29–87 constitute a 4Fe-4S domain; sequence EADPVVEKIDAILPQSQCGQCGYPGCKPYAEAICNGDEITKCIPGGQTTIVKIAEILGV. The [4Fe-4S] cluster site is built by Cys-46, Cys-49, Cys-54, Cys-70, Cys-110, Cys-113, Cys-116, Cys-120, Cys-140, Cys-143, Cys-146, and Cys-150. 2 4Fe-4S ferredoxin-type domains span residues 101–130 and 131–160; these read KVAFIDENMCIGCTKCIQACPVDAIIGTNK and AMHTIIPDLCTGCELCVAPCPTDCILMIPV.

This sequence belongs to the 4Fe4S bacterial-type ferredoxin family. RnfB subfamily. As to quaternary structure, the complex is composed of six subunits: RnfA, RnfB, RnfC, RnfD, RnfE and RnfG. [4Fe-4S] cluster serves as cofactor.

Its subcellular location is the cell inner membrane. Part of a membrane-bound complex that couples electron transfer with translocation of ions across the membrane. The polypeptide is Ion-translocating oxidoreductase complex subunit B (Haemophilus influenzae (strain 86-028NP)).